The following is a 444-amino-acid chain: Porin AaxA (444 aa).

The first 19 residues, 1–19 (MAFSRFYLLTALYTGGILA), serve as a signal peptide directing secretion. A disordered region spans residues 42–68 (KNSTQDSDSSPSESSPHPRQEPRRHVL). Over residues 46 to 56 (QDSDSSPSESS) the composition is skewed to low complexity.

It belongs to the OprB family.

It localises to the cell outer membrane. In terms of biological role, facilitates L-arginine uptake, as part of the AaxABC system. The arginine uptake by the bacterium in the macrophage may be a virulence factor against the host innate immune response. The polypeptide is Porin AaxA (aaxA) (Chlamydia felis (strain Fe/C-56) (Chlamydophila felis)).